Here is a 529-residue protein sequence, read N- to C-terminus: MSTVAIVDFGSQVTQLIARRVRELGVYSEVFPPSTDFQAMASRGIKIDAFILSGGPNSVQQLHGVPNAVSDVLNLNLQKGVPVLGICYGFQMLAHYFGADVAQSVAREFGRAWLDVIEPSSITEGVWSLGSKVDVWMSHSDSIVGEVPQGFRVVARSADTGAVAFMCNDERKIYGVQFHPEVAHTPGGREMLDNFLKIAGCTRDWTMGSFLHTQIGAIKSATDGGRVVAAISGGVDSSVASVLVHKAIGERLVCVFVDTGLLRKGEAGVVRDLFVGKLNMHVNVLDKSALFMQRLAGVQDPEVKRKIIGETFIEVFEQEAKSLGDIKFLMQGTIYPDVIESGVGESGTKIKSHHNVGGLPEIMNLSLVEPLRHLFKDEVRLLGKELGLPSAILDRHPFPGPGLAVRIMGEVTAERVELLREIDNIYIDMMRDSGLYDHIWQAFAVLVPVRTVGVMGDGRTYGYVCALRAVTSSDGMTADCFPFGETDERKLEFLAFLQKVSRAIVSNLQGVNRVVYDMTSKPPATIEWE.

The Glutamine amidotransferase type-1 domain maps to 3–204; the sequence is TVAIVDFGSQ…FLKIAGCTRD (202 aa). C87 acts as the Nucleophile in catalysis. Catalysis depends on residues H179 and E181. Residues 205-395 form the GMPS ATP-PPase domain; that stretch reads WTMGSFLHTQ…LGLPSAILDR (191 aa). Residue 232 to 238 participates in ATP binding; that stretch reads SGGVDSS.

Homodimer.

It carries out the reaction XMP + L-glutamine + ATP + H2O = GMP + L-glutamate + AMP + diphosphate + 2 H(+). The protein operates within purine metabolism; GMP biosynthesis; GMP from XMP (L-Gln route): step 1/1. In terms of biological role, catalyzes the synthesis of GMP from XMP. The polypeptide is GMP synthase [glutamine-hydrolyzing] (Anaplasma marginale (strain St. Maries)).